We begin with the raw amino-acid sequence, 506 residues long: Aspartic proteinase A1 (506 aa).

The N-terminal stretch at 1 to 24 (MKIYSRTVAVSLIVSFLLCFSAFA) is a signal peptide. Positions 25–64 (ERNDGTFRVGLKKLKLDSKNRLAARVESKQEKPLRAYRLG) are cleaved as a propeptide — activation peptide. The Peptidase A1 domain occupies 82–503 (YYGEIAIGTP…DFGNEQVGFA (422 aa)). The active site involves Asp100. Cystine bridges form between Cys113-Cys119 and Cys278-Cys282. Residue Asp287 is part of the active site. Positions 312-417 (VVSQQCKTVV…NELCERLPSP (106 aa)) constitute a Saposin B-type domain. 4 disulfide bridges follow: Cys317–Cys411, Cys342–Cys383, Cys348–Cys380, and Cys425–Cys462. N-linked (GlcNAc...) asparagine glycosylation is present at Asn397.

The protein belongs to the peptidase A1 family. As to expression, expressed in roots, leaves, stems, petals, carpels, seed pods and dry seeds.

Its subcellular location is the vacuole. In terms of biological role, involved in the breakdown of propeptides of storage proteins in protein-storage vacuoles. Possesses aspartic protease activity in vitro. This is Aspartic proteinase A1 (APA1) from Arabidopsis thaliana (Mouse-ear cress).